Consider the following 182-residue polypeptide: Translation initiation factor IF-3, chloroplastic (182 aa).

Belongs to the IF-3 family. As to quaternary structure, monomer.

It localises to the plastid. Its subcellular location is the chloroplast. Its function is as follows. IF-3 binds to the 30S ribosomal subunit and shifts the equilibrium between 70S ribosomes and their 50S and 30S subunits in favor of the free subunits, thus enhancing the availability of 30S subunits on which protein synthesis initiation begins. This Porphyra purpurea (Red seaweed) protein is Translation initiation factor IF-3, chloroplastic.